The following is a 641-amino-acid chain: MDGLQASAGPLRRGRPKRRRKPQPHSGSVLALPLRSRKIRKQLRSVVSRMAALRTQTLPSENSEESRVESTADDLGDALPGGAAVAAVPDAARREPYGHLGPAELLEASPAARSLQTPSARLVPASAPPARLVEVPAAPVRVVETSALLCTAQHLAAVQSSGAPATASGPQVDNTGGEPAWDSPLRRVLAELNRIPSSRRRAARLFEWLIAPMPPDHFYRRLWEREAVLVRRQDHTYYQGLFSTADLDSMLRNEEVQFGQHLDAARYINGRRETLNPPGRALPAAAWSLYQAGCSLRLLCPQAFSTTVWQFLAVLQEQFGSMAGSNVYLTPPNSQGFAPHYDDIEAFVLQLEGRKLWRVYRPRVPTEELALTSSPNFSQDDLGEPVLQTVLEPGDLLYFPRGFIHQAECQDGVHSLHLTLSTYQRNTWGDFLEAILPLAVQAAMEENVEFRRGLPRDFMDYMGAQHSDSKDPRRTAFMEKVRVLVARLGHFAPVDAVADQRAKDFIHDSLPPVLTDRERALSVYGLPIRWEAGEPVNVGAQLTTETEVHMLQDGIARLVGEGGHLFLYYTVENSRVYHLEEPKCLEIYPQQADAMELLLGSYPEFVRVGDLPCDSVEDQLSLATTLYDKGLLLTKMPLALN.

The residue at position 1 (Met1) is an N-acetylmethionine. Disordered stretches follow at residues 1–35 and 54–80; these read MDGL…LPLR and RTQT…DALP. Basic residues predominate over residues 12–23; it reads RRGRPKRRRKPQ. 3 positions are modified to phosphoserine: Ser60, Ser63, and Ser109. Residues 294–439 enclose the JmjC domain; the sequence is CSLRLLCPQA…DFLEAILPLA (146 aa). The Fe cation site is built by His340, Asp342, and His405.

This sequence belongs to the ROX family. NO66 subfamily. As to quaternary structure, interacts with SP7/OSX; the interaction is direct. Interacts with MYC. Interacts with PHF19; leading to its recruitment to H3K36me3 sites. The cofactor is Fe(2+). Widely expressed. Overexpressed in lung carcinomas.

It localises to the nucleus. The protein resides in the nucleolus. It is found in the nucleoplasm. The catalysed reaction is N(6),N(6)-dimethyl-L-lysyl(36)-[histone H3] + 2 2-oxoglutarate + 2 O2 = L-lysyl(36)-[histone H3] + 2 formaldehyde + 2 succinate + 2 CO2. It catalyses the reaction N(6)-methyl-L-lysyl-[protein] + 2-oxoglutarate + O2 = L-lysyl-[protein] + formaldehyde + succinate + CO2. The enzyme catalyses L-histidyl-[protein] + 2-oxoglutarate + O2 = (3S)-3-hydroxy-L-histidyl-[protein] + succinate + CO2. Functionally, oxygenase that can act as both a histone lysine demethylase and a ribosomal histidine hydroxylase. Specifically demethylates 'Lys-4' (H3K4me) and 'Lys-36' (H3K36me) of histone H3, thereby playing a central role in histone code. Preferentially demethylates trimethylated H3 'Lys-4' (H3K4me3) and monomethylated H3 'Lys-4' (H3K4me1) residues, while it has weaker activity for dimethylated H3 'Lys-36' (H3K36me2). Acts as a regulator of osteoblast differentiation via its interaction with SP7/OSX by demethylating H3K4me and H3K36me, thereby inhibiting SP7/OSX-mediated promoter activation. Also catalyzes demethylation of non-histone proteins, such as CGAS: demethylation of monomethylated CGAS promotes interaction between CGAS and PARP1, followed by PARP1 inactivation. Also catalyzes the hydroxylation of 60S ribosomal protein L8 on 'His-216', thereby playing a role in ribosome biogenesis. Participates in MYC-induced transcriptional activation. This is Ribosomal oxygenase 1 from Homo sapiens (Human).